Consider the following 303-residue polypeptide: Oxygen-dependent coproporphyrinogen-III oxidase (303 aa).

S93 contributes to the substrate binding site. A divalent metal cation is bound by residues H97 and H107. Residue H107 is the Proton donor of the active site. Residue 109 to 111 (NVR) coordinates substrate. The a divalent metal cation site is built by H146 and H176. The segment at 241 to 276 (YVEFNLVYDRGTLFGLQSGGRTESILMSLPPQVRWG) is important for dimerization. 259–261 (GGR) serves as a coordination point for substrate.

The protein belongs to the aerobic coproporphyrinogen-III oxidase family. As to quaternary structure, homodimer. The cofactor is a divalent metal cation.

It is found in the cytoplasm. It carries out the reaction coproporphyrinogen III + O2 + 2 H(+) = protoporphyrinogen IX + 2 CO2 + 2 H2O. Its pathway is porphyrin-containing compound metabolism; protoporphyrin-IX biosynthesis; protoporphyrinogen-IX from coproporphyrinogen-III (O2 route): step 1/1. Functionally, involved in the heme biosynthesis. Catalyzes the aerobic oxidative decarboxylation of propionate groups of rings A and B of coproporphyrinogen-III to yield the vinyl groups in protoporphyrinogen-IX. This chain is Oxygen-dependent coproporphyrinogen-III oxidase, found in Pseudomonas putida (strain ATCC 700007 / DSM 6899 / JCM 31910 / BCRC 17059 / LMG 24140 / F1).